A 400-amino-acid polypeptide reads, in one-letter code: WD repeat and FYVE domain-containing protein 2 (400 aa).

WD repeat units lie at residues 22-61 (GSQE…QYWP), 66-105 (AMPS…NKMT), 112-150 (AHQS…QRLG), 153-192 (RTSA…CTLL), 197-236 (GHTG…GTAI), and 240-279 (GHND…QETP). An FYVE-type zinc finger spans residues 281-352 (WLDSDSCQKC…VCDSCHEAIT (72 aa)). The Zn(2+) site is built by C287, C290, C314, C317, C322, C325, C344, and C347. One copy of the WD 7 repeat lies at 364–399 (DSKHNIVHVHFDATRGWLLTSGTDKVIKLWDMTPVV).

As to quaternary structure, homodimer. Interacts (via WD repeats 1-3) with AKT1, AKT2, PRKCZ and PRKCI. Interacts with VAMP2. Forms a complex with VAMP2 and PRKCZ. Interacts with FOXO1. Forms a complex with AKT1 and FOXO1. Highly expressed in the brain (at protein level).

The protein resides in the endosome. It localises to the early endosome. Its subcellular location is the cytoplasm. Functionally, acts in an adapter protein-like fashion to mediate the interaction between the kinase PRKCZ and its substrate VAMP2 and increases the PRKCZ-dependent phosphorylation of VAMP2. Positively regulates adipocyte differentiation, by facilitating the phosphorylation and thus inactivation of the anti-adipogenetic transcription factor FOXO1 by the kinase AKT1. Plays a role in endosomal control of AKT2 signaling; required for insulin-stimulated AKT2 phosphorylation and glucose uptake and insulin-stimulated phosphorylation of AKT2 substrates. Participates in transferrin receptor endocytosis. This chain is WD repeat and FYVE domain-containing protein 2 (Wdfy2), found in Mus musculus (Mouse).